The sequence spans 117 residues: UPF0102 protein Swoo_0351 (117 aa).

The protein belongs to the UPF0102 family.

The polypeptide is UPF0102 protein Swoo_0351 (Shewanella woodyi (strain ATCC 51908 / MS32)).